Reading from the N-terminus, the 494-residue chain is 5'-3' exonuclease PLD3 (494 aa).

At 1 to 37 (MNPKVEYKQIQSHDEAENQVLQHECHQAKARKYYRCA) the chain is on the cytoplasmic side. The helical; Signal-anchor for type II membrane protein transmembrane segment at 38–58 (VVIAIIITLLFCVLASQLLLF) threads the bilayer. Topologically, residues 59 to 494 (PLFSITSQTT…LSSWKEKCIF (436 aa)) are lumenal. N-linked (GlcNAc...) asparagine glycosylation is present at asparagine 100. The region spanning 198-225 (TDGVLHTKFWVVDSEHFYIGSANMDWRS) is the PLD phosphodiesterase 1 domain. Active-site residues include histidine 203, lysine 205, and aspartate 210. 5 N-linked (GlcNAc...) asparagine glycosylation sites follow: asparagine 238, asparagine 260, asparagine 270, asparagine 286, and asparagine 389. One can recognise a PLD phosphodiesterase 2 domain in the interval 413 to 439 (YARVNHNKYMVTDRVAYIGTSNWSGDY). Residues histidine 418, lysine 420, and aspartate 425 contribute to the active site. Residues asparagine 434, asparagine 451, and asparagine 477 are each glycosylated (N-linked (GlcNAc...) asparagine).

It belongs to the phospholipase D family. Post-translationally, N-glycosylated. In terms of processing, proteolytically processed to a soluble form that is stable within endosomes and lysosomes. During transport through the secretory pathway becomes proteolysed by cysteine proteases, thereby releasing a stable soluble lysosomal lumenal polypeptide, whereas the transmembrane-bound fragment is rapidly degraded. Its transport route to lysosomes involves ubiquitination and the ESCRT complex. Ubiquitinated. Ubiquitination mediates sorting into lysosomes.

The protein localises to the endoplasmic reticulum membrane. The protein resides in the lysosome lumen. It localises to the early endosome membrane. It is found in the late endosome membrane. Its subcellular location is the golgi apparatus membrane. The protein localises to the endosome membrane. The enzyme catalyses Exonucleolytic cleavage in the 5'- to 3'-direction to yield nucleoside 3'-phosphates.. Its function is as follows. 5'-&gt;3' DNA exonuclease which digests single-stranded DNA (ssDNA). Regulates inflammatory cytokine responses via the degradation of nucleic acids, by reducing the concentration of ssDNA able to stimulate TLR9, a nucleotide-sensing receptor in collaboration with PLD4. May be important in myotube formation. Plays a role in lysosomal homeostasis. Involved in the regulation of endosomal protein sorting. The polypeptide is 5'-3' exonuclease PLD3 (pld3) (Xenopus tropicalis (Western clawed frog)).